A 621-amino-acid chain; its full sequence is Zinc metalloproteinase-disintegrin-like NaMP (621 aa).

Positions Met-1–Ser-20 are cleaved as a signal peptide. A propeptide spanning residues Thr-21–Ile-188 is cleaved from the precursor. The Peptidase M12B domain maps to Lys-206 to Pro-402. N-linked (GlcNAc...) asparagine glycosylation is found at Asn-225, Asn-268, and Asn-319. 17 disulfide bridges follow: Cys-317/Cys-397, Cys-357/Cys-381, Cys-359/Cys-364, Cys-413/Cys-442, Cys-424/Cys-437, Cys-426/Cys-432, Cys-436/Cys-459, Cys-450/Cys-456, Cys-455/Cys-481, Cys-468/Cys-488, Cys-475/Cys-507, Cys-500/Cys-512, Cys-519/Cys-569, Cys-534/Cys-579, Cys-547/Cys-557, Cys-564/Cys-605, and Cys-599/Cys-610. His-342 provides a ligand contact to Zn(2+). Glu-343 is a catalytic residue. Positions 346 and 352 each coordinate Zn(2+). The Disintegrin domain occupies Thr-410–Asn-496. A D/ECD-tripeptide motif is present at residues Asp-474–Asp-476. An N-linked (GlcNAc...) asparagine glycan is attached at Asn-551.

Belongs to the venom metalloproteinase (M12B) family. P-III subfamily. P-IIIa sub-subfamily. In terms of assembly, monomer. It depends on Zn(2+) as a cofactor. In terms of tissue distribution, expressed by the venom gland.

Its subcellular location is the secreted. Functionally, snake venom zinc metalloproteinase that inhibits platelet aggregation and degrades fibrinogen. The polypeptide is Zinc metalloproteinase-disintegrin-like NaMP (Naja atra (Chinese cobra)).